A 494-amino-acid chain; its full sequence is Cytochrome P450 2A4 (494 aa).

Ser-131 carries the phosphoserine modification. At Lys-379 the chain carries N6-acetyllysine. Cys-439 is a binding site for heme.

The protein belongs to the cytochrome P450 family. It depends on heme as a cofactor. Kidney and lung. Expressed in liver, with a strong circadian rhythmicity. Circadian expression is regulated by DBP.

The protein resides in the endoplasmic reticulum membrane. It is found in the microsome membrane. The catalysed reaction is an organic molecule + reduced [NADPH--hemoprotein reductase] + O2 = an alcohol + oxidized [NADPH--hemoprotein reductase] + H2O + H(+). In terms of biological role, highly active in the 15-alpha-hydroxylation of testosterone. Also active in the 15-alpha-hydroxylation of progesterone and androstenedione. Little or no activity on corticosterone, pregnenolone, dehydroepiandrosterone, estradiol or estriol. The protein is Cytochrome P450 2A4 (Cyp2a4) of Mus musculus (Mouse).